Reading from the N-terminus, the 620-residue chain is Arginine--tRNA ligase (620 aa).

The short motif at 147–157 (ANPTGPIHIGG) is the 'HIGH' region element.

This sequence belongs to the class-I aminoacyl-tRNA synthetase family. Monomer.

The protein resides in the cytoplasm. It catalyses the reaction tRNA(Arg) + L-arginine + ATP = L-arginyl-tRNA(Arg) + AMP + diphosphate. The polypeptide is Arginine--tRNA ligase (Bifidobacterium longum (strain NCC 2705)).